Here is a 102-residue protein sequence, read N- to C-terminus: NADH-quinone oxidoreductase subunit K (102 aa).

The next 3 helical transmembrane spans lie at 5 to 25 (IAHY…GIFL), 31 to 51 (IVIL…FVAF), and 66 to 86 (FVLT…VVFF).

It belongs to the complex I subunit 4L family. NDH-1 is composed of 14 different subunits. Subunits NuoA, H, J, K, L, M, N constitute the membrane sector of the complex.

It localises to the cell inner membrane. It catalyses the reaction a quinone + NADH + 5 H(+)(in) = a quinol + NAD(+) + 4 H(+)(out). NDH-1 shuttles electrons from NADH, via FMN and iron-sulfur (Fe-S) centers, to quinones in the respiratory chain. The immediate electron acceptor for the enzyme in this species is believed to be ubiquinone. Couples the redox reaction to proton translocation (for every two electrons transferred, four hydrogen ions are translocated across the cytoplasmic membrane), and thus conserves the redox energy in a proton gradient. The polypeptide is NADH-quinone oxidoreductase subunit K (Brucella abortus (strain S19)).